The sequence spans 152 residues: Protein FERTILITY RESTORER RF2, mitochondrial (152 aa).

A mitochondrion-targeting transit peptide spans 1 to 52 (MSTLVTCSLPGAVTTHASTRRFGGSQFQTSQASCISFKREVSAKAVLRSVRC). Over residues 52 to 69 (CNATQTQSAQRKSSTATV) the composition is skewed to polar residues. The tract at residues 52–99 (CNATQTQSAQRKSSTATVKRSDPKGKIQGPKLDDGSGGFPPFRFGKGG) is disordered.

The protein localises to the mitochondrion. Its function is as follows. Restores fertility in rice varieties with LD-type cytoplasmic male sterility (CMS). CMS is caused by genetic incompatibility between nuclei and mitochondria within male reproductive organs. Corresponds to the functional allele of RF2, which is dependent of the presence of Ile-78 in the japonica cultivars Fukuyama and Owarihatamochi (AC F1SZ42), and indica cultivar Kasalath (AC F1SZ41). Non-functional RF2 alleles are found in japonica cultivars Taichung 65 and Nipponbare (AC F1SZ44), where Ile-78 is replaced by Thr-78. This is Protein FERTILITY RESTORER RF2, mitochondrial from Oryza sativa subsp. japonica (Rice).